The chain runs to 242 residues: TGACG-sequence-specific DNA-binding protein TGA-1B (242 aa).

The interval 1–125 (EFCDFSGNQA…HSSPNFENNS (125 aa)) is disordered. Residues 18–45 (DTSSPELRQSSSGSDVLNATSSTSSHQV) are compositionally biased toward polar residues. The span at 66–79 (EGSRESANDNKGLG) shows a compositional bias: basic and acidic residues. Residues 88-125 (SPESQGSGNYGSNVSEGLNYPSDSNKSVHSSPNFENNS) show a composition bias toward polar residues. Residues 183–242 (DEKKRARLVRNRESAQLSRQRKKHYVEELEDKVRIMHSTIQDLNAKVAYIIAENATLKTQ) form the bZIP domain. Residues 185 to 216 (KKRARLVRNRESAQLSRQRKKHYVEELEDKVR) are basic motif. Positions 225-239 (LNAKVAYIIAENATL) are leucine-zipper.

This sequence belongs to the bZIP family.

It localises to the nucleus. Binds specifically to the DNA sequence 5'-TGACG-3'. The protein is TGACG-sequence-specific DNA-binding protein TGA-1B (TGA1B) of Nicotiana tabacum (Common tobacco).